The chain runs to 258 residues: MKTPFGKAAAGQRSRTGAGHGSVSVTMIKRKAAHKKHRSRPTSQPRGNIVGCRIQHGWKDGDEPLTQWKGTVLDQVPVNPSLYLIKYDGFDCVYGLELHRDERVSSLEVLPNRVASSRISDTHLAEIMVGKAVEHIFETEEGSKNEWRGMVLAQAPVMNTWFYITYEKDPVLYMYQLLDDYKDGDLRILQDSNDSPLAEREPGEVIDSLVGKQVEYAKDDGSKRTGMVIHQVEAKPSVYFIKFDDDFHIYVYDLVKTS.

The disordered stretch occupies residues 1–23 (MKTPFGKAAAGQRSRTGAGHGSV). Tudor-like domain stretches follow at residues 50–99 (VGCR…LELH), 129–178 (VGKA…YQLL), and 210–255 (VGKQ…YDLV). 2 histone H3K4me3 and H3R8me2a binding regions span residues glutamate 138 and 246 to 248 (DFH).

It belongs to the SPIN/STSY family. As to quaternary structure, interacts with C11orf84/SPINDOC.

Its function is as follows. Exhibits H3K4me3-binding activity. The polypeptide is Spindlin-3 (SPIN3) (Homo sapiens (Human)).